The primary structure comprises 250 residues: UPF0259 membrane protein bbp_256 (250 aa).

Helical transmembrane passes span 21-41 (PIIV…DSII), 86-106 (FSLL…IQMT), 125-145 (FFKL…GFLL), 146-166 (YFIP…ILLI), 188-208 (IIVP…LIIS), and 216-236 (FLAY…LIIY).

The protein belongs to the UPF0259 family.

The protein localises to the cell membrane. The polypeptide is UPF0259 membrane protein bbp_256 (Buchnera aphidicola subsp. Baizongia pistaciae (strain Bp)).